Reading from the N-terminus, the 247-residue chain is DNA polymerase sliding clamp (247 aa).

The protein belongs to the PCNA family. Homotrimer. The subunits circularize to form a toroid; DNA passes through its center. Replication factor C (RFC) is required to load the toroid on the DNA.

Its function is as follows. Sliding clamp subunit that acts as a moving platform for DNA processing. Responsible for tethering the catalytic subunit of DNA polymerase and other proteins to DNA during high-speed replication. The polypeptide is DNA polymerase sliding clamp (Methanospirillum hungatei JF-1 (strain ATCC 27890 / DSM 864 / NBRC 100397 / JF-1)).